We begin with the raw amino-acid sequence, 306 residues long: Epoxyqueuosine reductase (306 aa).

The Proton donor role is filled by Asp-131. In terms of domain architecture, 4Fe-4S ferredoxin-type spans 173-205 (LDLTYDHPVTDHCGTCTACIDACPTQAIVQPYV). [4Fe-4S] cluster-binding residues include Cys-185, Cys-188, Cys-191, Cys-195, Cys-211, Cys-238, Cys-241, and Cys-245.

It belongs to the QueG family. Monomer. Requires cob(II)alamin as cofactor. It depends on [4Fe-4S] cluster as a cofactor.

The protein localises to the cytoplasm. The catalysed reaction is epoxyqueuosine(34) in tRNA + AH2 = queuosine(34) in tRNA + A + H2O. It functions in the pathway tRNA modification; tRNA-queuosine biosynthesis. Its function is as follows. Catalyzes the conversion of epoxyqueuosine (oQ) to queuosine (Q), which is a hypermodified base found in the wobble positions of tRNA(Asp), tRNA(Asn), tRNA(His) and tRNA(Tyr). This chain is Epoxyqueuosine reductase, found in Cellulophaga algicola (strain DSM 14237 / IC166 / ACAM 630).